The sequence spans 233 residues: Small ribosomal subunit protein uS2 (233 aa).

The protein belongs to the universal ribosomal protein uS2 family.

This Bacillus mycoides (strain KBAB4) (Bacillus weihenstephanensis) protein is Small ribosomal subunit protein uS2.